A 528-amino-acid chain; its full sequence is ADP,ATP carrier protein 1 (528 aa).

12 helical membrane passes run 24–44 (LKKV…YTIL), 63–83 (IPFI…LIYA), 93–113 (ALFF…PVVI), 124–144 (AFAD…IAML), 149–169 (FAVF…LMFW), 184–204 (FYAL…PAII), 220–240 (WGVS…IIAA), 284–304 (YMLL…LVEV), 327–347 (FSFW…GNVI), 356–376 (ALVT…LVIF), 381–401 (TGLV…VGAI), and 463–483 (IGAM…VWLT).

This sequence belongs to the ADP/ATP translocase tlc family.

It is found in the cell membrane. This is ADP,ATP carrier protein 1 (tlcA) from Chlamydia trachomatis serovar D (strain ATCC VR-885 / DSM 19411 / UW-3/Cx).